The chain runs to 205 residues: Heme-binding protein 2 (205 aa).

The tract at residues 1–39 is disordered; sequence MAEPLQPDPGAAEDAAAQAVETPGWKAPEDAGPQPGSYE. The residue at position 2 (alanine 2) is an N-acetylalanine. Position 181 is a phosphoserine (serine 181).

The protein belongs to the HEBP family. In terms of assembly, monomer. Interacts with LRPPRC. May interact with BCL2L1; an interaction with BCL2L1 was observed using a peptide, but not with the full-length protein. The full-length protein would have to undergo a major conformation change for the interaction to occur. Interacts with PDCD6. Detected in placenta.

It is found in the cytoplasm. The protein localises to the mitochondrion. Its function is as follows. Can promote mitochondrial permeability transition and facilitate necrotic cell death under different types of stress conditions. The chain is Heme-binding protein 2 (HEBP2) from Homo sapiens (Human).